Here is a 554-residue protein sequence, read N- to C-terminus: Undecaprenyl phosphate-alpha-4-amino-4-deoxy-L-arabinose arabinosyl transferase (554 aa).

11 helical membrane passes run L4 to I24, F87 to L107, F115 to V135, F178 to I198, L206 to L226, Y262 to L282, E293 to G313, L315 to T335, I352 to V372, Q384 to M404, and H410 to P430.

The protein belongs to the glycosyltransferase 83 family.

It is found in the cell inner membrane. It catalyses the reaction 4-amino-4-deoxy-alpha-L-arabinopyranosyl di-trans,octa-cis-undecaprenyl phosphate + lipid IVA = lipid IIA + di-trans,octa-cis-undecaprenyl phosphate.. The protein operates within lipopolysaccharide metabolism; 4-amino-4-deoxy-beta-L-arabinose-lipid A biosynthesis. Catalyzes the transfer of the L-Ara4N moiety of the glycolipid undecaprenyl phosphate-alpha-L-Ara4N to lipid A. The modified arabinose is attached to lipid A and is required for resistance to polymyxin and cationic antimicrobial peptides. The polypeptide is Undecaprenyl phosphate-alpha-4-amino-4-deoxy-L-arabinose arabinosyl transferase (Yersinia enterocolitica serotype O:8 / biotype 1B (strain NCTC 13174 / 8081)).